The chain runs to 821 residues: Enhancer of polycomb-like protein 1 (821 aa).

Polar residues predominate over residues 1–12; that stretch reads MSSNGGSNTNER. Disordered regions lie at residues 1–43, 427–485, and 779–799; these read MSSN…TRFR, KAAA…QPAM, and QFLQ…PINP. Composition is skewed to low complexity over residues 18–39 and 449–465; these read SGSL…DSGS and EQAA…SSSQ. The span at 786–799 shows a compositional bias: polar residues; that stretch reads ENGSPNNATMPINP.

This sequence belongs to the enhancer of polycomb family. As to quaternary structure, component of the NuA4 histone acetyltransferase complex.

It is found in the nucleus. Component of the NuA4 histone acetyltransferase complex which is involved in transcriptional activation of selected genes principally by acetylation of nucleosomal histone H4 and H2A. The NuA4 complex is also involved in DNA repair. Involved in gene silencing by neighboring heterochromatin, blockage of the silencing spreading along the chromosome, and required for cell cycle progression through G2/M. This is Enhancer of polycomb-like protein 1 (EPL1) from Candida glabrata (strain ATCC 2001 / BCRC 20586 / JCM 3761 / NBRC 0622 / NRRL Y-65 / CBS 138) (Yeast).